A 78-amino-acid chain; its full sequence is Large ribosomal subunit protein bL28 (78 aa).

This sequence belongs to the bacterial ribosomal protein bL28 family.

This chain is Large ribosomal subunit protein bL28, found in Thermosynechococcus vestitus (strain NIES-2133 / IAM M-273 / BP-1).